We begin with the raw amino-acid sequence, 97 residues long: MNAERKYLVLLAPVISEKSTMVQQQANQFVFKVARDATKREIRSAVEKLFEVQVLSVQTCNYLGKEKRVGRHVGRRSSWKKAYVRLAEGSSIDYGVA.

It belongs to the universal ribosomal protein uL23 family. In terms of assembly, part of the 50S ribosomal subunit. Contacts protein L29, and trigger factor when it is bound to the ribosome.

In terms of biological role, one of the early assembly proteins it binds 23S rRNA. One of the proteins that surrounds the polypeptide exit tunnel on the outside of the ribosome. Forms the main docking site for trigger factor binding to the ribosome. This is Large ribosomal subunit protein uL23 from Acidithiobacillus ferrooxidans (strain ATCC 23270 / DSM 14882 / CIP 104768 / NCIMB 8455) (Ferrobacillus ferrooxidans (strain ATCC 23270)).